Here is an 829-residue protein sequence, read N- to C-terminus: UBA domain-containing protein 8 (829 aa).

The 100-residue stretch at 10-109 (EQQEFDRLLE…KQAKDDHHIK (100 aa)) folds into the EH 1 domain. Residues 43 to 78 (LPQKILAKIWDYCDQEDKGSLDRNQVYACFRLISQA) enclose the EF-hand 1 domain. The tract at residues 93–121 (GDPPILPKQAKDDHHIKRSSSETADFTPF) is disordered. Residues Ser112 and Ser113 each carry the phosphoserine modification. 2 consecutive EH domains span residues 129–225 (ERSE…AKSE) and 300–398 (DRSN…SDDT). One can recognise an EF-hand 2 domain in the interval 333-368 (LDSEELARIWDTVDTQDRGYIDKDEFAVAMEIIKLR). 2 stretches are compositionally biased toward polar residues: residues 466 to 506 (SFQD…TQSI) and 574 to 590 (TIPGSTSAALDDQQTTE). Disordered regions lie at residues 466–520 (SFQD…VNSS), 574–614 (TIPG…MRKL), and 724–785 (KPQV…QSYE). Positions 602–709 (EPTEEEQEEM…AKIDSIIADS (108 aa)) form a coiled coil. Positions 728–737 (TPAPPTPAPT) are enriched in pro residues. The span at 764-774 (HANSSTPMNYV) shows a compositional bias: polar residues. Positions 775-785 (SQPESPPQSYE) are enriched in low complexity. The 41-residue stretch at 788 to 828 (QNDNELLQELLSMGFPREKAVIALEATNYDVNEAANILLSS) folds into the UBA domain.

The polypeptide is UBA domain-containing protein 8 (ucp8) (Schizosaccharomyces pombe (strain 972 / ATCC 24843) (Fission yeast)).